Reading from the N-terminus, the 482-residue chain is Hydroxymethylglutaryl-CoA synthase A (482 aa).

E85 (proton donor/acceptor) is an active-site residue. The Acyl-thioester intermediate role is filled by C119. 7 residues coordinate (3S)-3-hydroxy-3-methylglutaryl-CoA: C119, T161, S211, H249, K258, N325, and S358. H249 serves as the catalytic Proton donor/acceptor.

Belongs to the thiolase-like superfamily. HMG-CoA synthase family.

It catalyses the reaction acetoacetyl-CoA + acetyl-CoA + H2O = (3S)-3-hydroxy-3-methylglutaryl-CoA + CoA + H(+). Its pathway is metabolic intermediate biosynthesis; (R)-mevalonate biosynthesis; (R)-mevalonate from acetyl-CoA: step 2/3. Its function is as follows. Condenses acetyl-CoA with acetoacetyl-CoA to form HMG-CoA, which is the substrate for HMG-CoA reductase. The protein is Hydroxymethylglutaryl-CoA synthase A (hgsA) of Dictyostelium discoideum (Social amoeba).